Reading from the N-terminus, the 210-residue chain is Ribosomal RNA large subunit methyltransferase E (210 aa).

5 residues coordinate S-adenosyl-L-methionine: G64, W66, D84, N100, and D125. K165 serves as the catalytic Proton acceptor.

The protein belongs to the class I-like SAM-binding methyltransferase superfamily. RNA methyltransferase RlmE family.

The protein resides in the cytoplasm. It catalyses the reaction uridine(2552) in 23S rRNA + S-adenosyl-L-methionine = 2'-O-methyluridine(2552) in 23S rRNA + S-adenosyl-L-homocysteine + H(+). Functionally, specifically methylates the uridine in position 2552 of 23S rRNA at the 2'-O position of the ribose in the fully assembled 50S ribosomal subunit. In Buchnera aphidicola subsp. Baizongia pistaciae (strain Bp), this protein is Ribosomal RNA large subunit methyltransferase E.